The primary structure comprises 338 residues: Glycerol-3-phosphate dehydrogenase [NAD(P)+] (338 aa).

The NADPH site is built by Trp-12, His-33, and Lys-110. Residues Lys-110, Gly-142, and Ser-144 each contribute to the sn-glycerol 3-phosphate site. Ala-146 serves as a coordination point for NADPH. 5 residues coordinate sn-glycerol 3-phosphate: Lys-197, Asp-250, Ser-260, Arg-261, and Asn-262. Residue Lys-197 is the Proton acceptor of the active site. Arg-261 provides a ligand contact to NADPH. Residues Val-286 and Glu-288 each coordinate NADPH.

This sequence belongs to the NAD-dependent glycerol-3-phosphate dehydrogenase family.

The protein resides in the cytoplasm. It carries out the reaction sn-glycerol 3-phosphate + NAD(+) = dihydroxyacetone phosphate + NADH + H(+). The catalysed reaction is sn-glycerol 3-phosphate + NADP(+) = dihydroxyacetone phosphate + NADPH + H(+). It functions in the pathway membrane lipid metabolism; glycerophospholipid metabolism. In terms of biological role, catalyzes the reduction of the glycolytic intermediate dihydroxyacetone phosphate (DHAP) to sn-glycerol 3-phosphate (G3P), the key precursor for phospholipid synthesis. In Acidobacterium capsulatum (strain ATCC 51196 / DSM 11244 / BCRC 80197 / JCM 7670 / NBRC 15755 / NCIMB 13165 / 161), this protein is Glycerol-3-phosphate dehydrogenase [NAD(P)+].